The sequence spans 556 residues: Arginine--tRNA ligase (556 aa).

Residues 129-139 (ANPTGPLHVGH) carry the 'HIGH' region motif.

It belongs to the class-I aminoacyl-tRNA synthetase family. In terms of assembly, monomer.

Its subcellular location is the cytoplasm. It catalyses the reaction tRNA(Arg) + L-arginine + ATP = L-arginyl-tRNA(Arg) + AMP + diphosphate. The chain is Arginine--tRNA ligase from Desulfosudis oleivorans (strain DSM 6200 / JCM 39069 / Hxd3) (Desulfococcus oleovorans).